The sequence spans 147 residues: Large ribosomal subunit protein bL9 (147 aa).

Belongs to the bacterial ribosomal protein bL9 family.

Its function is as follows. Binds to the 23S rRNA. This Clostridium tetani (strain Massachusetts / E88) protein is Large ribosomal subunit protein bL9.